Consider the following 555-residue polypeptide: Lysine--tRNA ligase (555 aa).

Positions 37-45 match the 'HIGH' region motif; sequence TSGRLHVGN. Residues 301–305 carry the 'KMSKS' region motif; the sequence is AMSSS.

The protein belongs to the class-I aminoacyl-tRNA synthetase family.

Its subcellular location is the cytoplasm. The enzyme catalyses tRNA(Lys) + L-lysine + ATP = L-lysyl-tRNA(Lys) + AMP + diphosphate. The protein is Lysine--tRNA ligase of Methanopyrus kandleri (strain AV19 / DSM 6324 / JCM 9639 / NBRC 100938).